Reading from the N-terminus, the 342-residue chain is Small ribosomal subunit protein uS2 (342 aa).

The disordered stretch occupies residues 235-283; it reads EENAPFEQDEPRKPSQKPKQNRPENKPRFDKQAPRAAAKPEVKAEVKPE. Residues 255–283 show a composition bias toward basic and acidic residues; sequence NRPENKPRFDKQAPRAAAKPEVKAEVKPE.

It belongs to the universal ribosomal protein uS2 family.

The protein is Small ribosomal subunit protein uS2 of Acholeplasma laidlawii (strain PG-8A).